Reading from the N-terminus, the 671-residue chain is UvrABC system protein C (671 aa).

Residues 1-20 (MPHLPDSMSPEAPAGPAPAT) form a disordered region. The segment covering 10–20 (PEAPAGPAPAT) has biased composition (low complexity). Residues 37 to 115 (PLPGVYRYFD…IKTLNPKYNI (79 aa)) form the GIY-YIG domain. The UVR domain maps to 232–267 (RQVMEALEARMMAHAEKLEFEQAAELRNQVAALSNV).

It belongs to the UvrC family. As to quaternary structure, interacts with UvrB in an incision complex.

It localises to the cytoplasm. Its function is as follows. The UvrABC repair system catalyzes the recognition and processing of DNA lesions. UvrC both incises the 5' and 3' sides of the lesion. The N-terminal half is responsible for the 3' incision and the C-terminal half is responsible for the 5' incision. The sequence is that of UvrABC system protein C from Albidiferax ferrireducens (strain ATCC BAA-621 / DSM 15236 / T118) (Rhodoferax ferrireducens).